Reading from the N-terminus, the 308-residue chain is Glutamyl-Q tRNA(Asp) synthetase (308 aa).

L-glutamate contacts are provided by residues 19 to 23 (RFAPS) and Glu-55. The 'HIGH' region signature appears at 22 to 32 (PSPSGELHFGS). Positions 111, 113, 125, and 129 each coordinate Zn(2+). Residues Tyr-182 and Arg-200 each coordinate L-glutamate. Residues 238 to 242 (KLSKQ) carry the 'KMSKS' region motif. Position 241 (Lys-241) interacts with ATP.

It belongs to the class-I aminoacyl-tRNA synthetase family. GluQ subfamily. It depends on Zn(2+) as a cofactor.

Functionally, catalyzes the tRNA-independent activation of glutamate in presence of ATP and the subsequent transfer of glutamate onto a tRNA(Asp). Glutamate is transferred on the 2-amino-5-(4,5-dihydroxy-2-cyclopenten-1-yl) moiety of the queuosine in the wobble position of the QUC anticodon. The sequence is that of Glutamyl-Q tRNA(Asp) synthetase from Escherichia coli (strain K12 / MC4100 / BW2952).